The chain runs to 942 residues: Leucine--tRNA ligase 1 (942 aa).

Residues 39 to 49 (PYTNSPLHIGH) carry the 'HIGH' region motif. Residues 624 to 628 (KMSKS) carry the 'KMSKS' region motif. An ATP-binding site is contributed by Lys627.

Belongs to the class-I aminoacyl-tRNA synthetase family.

It localises to the cytoplasm. It carries out the reaction tRNA(Leu) + L-leucine + ATP = L-leucyl-tRNA(Leu) + AMP + diphosphate. In Sulfolobus acidocaldarius (strain ATCC 33909 / DSM 639 / JCM 8929 / NBRC 15157 / NCIMB 11770), this protein is Leucine--tRNA ligase 1.